Consider the following 96-residue polypeptide: MALVRGFMAAKKILGGSVAGTRKETSAPKGFLAVYVGESQRKKQRHLVPVSYLNQPLFQALLIKAEEEFGFNHPMGGLTIPCPEDTFLTVTSQIQG.

This sequence belongs to the ARG7 family.

Its subcellular location is the cell membrane. Its function is as follows. Functions as a positive effector of cell expansion through modulation of auxin transport. Involved in thermo-responsiveness of plant architecture. Enhances plasma membrane H(+)-ATPase. This chain is Auxin-responsive protein SAUR29, found in Arabidopsis thaliana (Mouse-ear cress).